The following is a 256-amino-acid chain: ATG8-interacting protein 1 (256 aa).

Residues 14 to 17 (WEVV) carry the AIM (Atg8-family-interacting motif) motif. Residues 181–200 (ANAIWSLFFAAAVTGLVVLG) form a helical membrane-spanning segment. Residues 208 to 211 (WQVL) carry the AIM (Atg8-family-interacting motif) motif.

As to quaternary structure, interacts with ATG8F. Interacts with ATG8H. Interacts with APE1 and PSBS/NPQ4.

The protein localises to the endoplasmic reticulum membrane. It localises to the membrane. Its subcellular location is the plastid. It is found in the chloroplast membrane. Its function is as follows. Involved in a special stress-induced plastid-to-vacuole protein trafficking pathway. Interacts with ATG8F in plastid bodies to subsequently enable their delivery to the vacuole by an autophagic pathway. Interacts with the plastid proteins APE1 and PSBS/NPQ4 and may recruit them as cargo into plastid bodies that may be recognized by the autophagy machinery for degradation in the vacuole. Involved in the alleviation of damage caused by salt stress during plant development, probably through its involvement in plastid-to-vacuole and ER-to-vacuole trafficking. Plays a role in seed germination in response to exogenous abscisic acid (ABA) treatment. In Arabidopsis thaliana (Mouse-ear cress), this protein is ATG8-interacting protein 1.